Here is a 316-residue protein sequence, read N- to C-terminus: Ribosomal RNA small subunit methyltransferase H (316 aa).

Residues 35-37, D55, F84, D105, and Q112 each bind S-adenosyl-L-methionine; that span reads SGH.

This sequence belongs to the methyltransferase superfamily. RsmH family.

Its subcellular location is the cytoplasm. The enzyme catalyses cytidine(1402) in 16S rRNA + S-adenosyl-L-methionine = N(4)-methylcytidine(1402) in 16S rRNA + S-adenosyl-L-homocysteine + H(+). Functionally, specifically methylates the N4 position of cytidine in position 1402 (C1402) of 16S rRNA. The chain is Ribosomal RNA small subunit methyltransferase H from Streptococcus pyogenes serotype M4 (strain MGAS10750).